We begin with the raw amino-acid sequence, 457 residues long: Glycine receptor subunit alpha-1 (457 aa).

The first 28 residues, 1–28 (MYSFNTLRFYLWETIVFFSLAASKEAEA), serve as a signal peptide directing secretion. Over 29-250 (ARSAPKPMSP…RFHLERQMGY (222 aa)) the chain is Extracellular. The N-linked (GlcNAc...) asparagine glycan is linked to asparagine 66. Arginine 93 and serine 157 together coordinate glycine. A disulfide bridge links cysteine 166 with cysteine 180. Residues glutamate 220 and aspartate 222 each coordinate Zn(2+). Cysteines 226 and 237 form a disulfide. 230–235 (YNTGKF) serves as a coordination point for strychnine. Threonine 232 contacts glycine. Histidine 243 contacts Zn(2+). Residues 251–272 (YLIQMYIPSLLIVILSWISFWI) traverse the membrane as a helical segment. Residues 273-277 (NMDAA) lie on the Cytoplasmic side of the membrane. The helical transmembrane segment at 278–298 (PARVGLGITTVLTMTTQSSGS) threads the bilayer. At 299 to 309 (RASLPKVSYVK) the chain is on the extracellular side. The helical transmembrane segment at 310–330 (AIDIWMAVCLLFVFSALLEYA) threads the bilayer. Topologically, residues 331 to 425 (AVNFVSRQHK…FIQRAKKIDK (95 aa)) are cytoplasmic. The interval 391–410 (KGANNNNTTNPPPAPSKSPE) is disordered. A helical membrane pass occupies residues 426–446 (ISRIGFPMAFLIFNMFYWIIY). Topologically, residues 447–457 (KIVRREDVHNK) are extracellular.

This sequence belongs to the ligand-gated ion channel (TC 1.A.9) family. Glycine receptor (TC 1.A.9.3) subfamily. GLRA1 sub-subfamily. As to quaternary structure, interacts with GLRB to form heteropentameric channels; this is probably the predominant form in vivo. Heteropentamer composed of four GLRA1 subunits and one GLRB subunit. Heteropentamer composed of two GLRA1 and three GLRB. Heteropentamer composed of three GLRA1 and two GLRB. Homopentamer (in vitro). Both homopentamers and heteropentamers form functional ion channels, but their characteristics are subtly different. Detected in spinal cord neurons. Detected in brain stem neurons. Detected at lower levels in hippocampus and cerebellum. Detected in the inner plexiform layer of the retina (at protein level).

It is found in the postsynaptic cell membrane. The protein localises to the synapse. The protein resides in the perikaryon. It localises to the cell projection. Its subcellular location is the dendrite. It is found in the cell membrane. It catalyses the reaction chloride(in) = chloride(out). Channel opening is triggered by extracellular glycine. Channel characteristics depend on the subunit composition; heteropentameric channels are activated by lower glycine levels and display faster desensitization. Channel opening is also triggered by taurine and beta-alanine. Inhibited by strychnine. Strychnine binding locks the channel in a closed conformation and prevents channel opening in response to extracellular glycine. Inhibited by picrotoxin. Channel activity is enhanced by 5 uM Zn(2+) and inhibited by 100 uM Zn(2+). Functionally, subunit of heteromeric glycine-gated chloride channels. Plays an important role in the down-regulation of neuronal excitability. Contributes to the generation of inhibitory postsynaptic currents. Channel activity is potentiated by ethanol. Potentiation of channel activity by intoxicating levels of ethanol contribute to the sedative effects of ethanol. This chain is Glycine receptor subunit alpha-1 (Glra1), found in Mus musculus (Mouse).